Consider the following 919-residue polypeptide: GPI ethanolamine phosphate transferase 1 (919 aa).

The Cytoplasmic segment spans residues 1-9; that stretch reads MWNKTRTTL. The helical transmembrane segment at 10-30 threads the bilayer; sequence LAVGVLFHLFYLWSIFDIYFI. At 31-457 the chain is on the lumenal side; sequence SPLVHGMSPY…TTYNWRFIRT (427 aa). Residues asparagine 90, asparagine 138, asparagine 198, asparagine 202, asparagine 286, and asparagine 312 are each glycosylated (N-linked (GlcNAc...) asparagine). Residues 458-478 form a helical membrane-spanning segment; sequence IVTFGFVGWIFFSFIIFLKSF. Over 479 to 488 the chain is Cytoplasmic; sequence ILENVIDDQK. The chain crosses the membrane as a helical span at residues 489–509; the sequence is ASPLSHAVFGSIGILLNWILF. Over 510-512 the chain is Lumenal; the sequence is YQH. Residues 513–533 traverse the membrane as a helical segment; sequence SPFNFYMYLLFPLYFWSYIFT. The Cytoplasmic segment spans residues 534–553; sequence NRSVLRSGIKEFFKGTSPWK. Residues 554–574 form a helical membrane-spanning segment; the sequence is RVLITISIISVYEGIVYGFFH. The Lumenal segment spans residues 575 to 576; that stretch reads RW. The chain crosses the membrane as a helical span at residues 577–597; the sequence is TFTLITNILAFYPFICGVREL. A topological domain (cytoplasmic) is located at residue serine 598. Residues 599–619 form a helical membrane-spanning segment; the sequence is VNILWIITSVLLSTFTLFDAV. Residues 620–626 are Lumenal-facing; that stretch reads KIEDLNQ. The helical transmembrane segment at 627-647 threads the bilayer; sequence IHLAGLLIILSAFYALYKIHS. The Cytoplasmic segment spans residues 648–655; sequence RINSYTRA. A helical membrane pass occupies residues 656-676; the sequence is IFAIQISLVAAMLAVTHRSVI. The Lumenal portion of the chain corresponds to 677-687; sequence SLQLRQGLPRE. A helical transmembrane segment spans residues 688 to 708; the sequence is SQVAGWIIFFVSLFVMPILHY. Residues 709–720 lie on the Cytoplasmic side of the membrane; it reads RKPNNDYKVRLL. Residues 721-741 form a helical membrane-spanning segment; it reads IIYLTFAPSFIILTISFESLF. The Lumenal portion of the chain corresponds to 742-776; sequence YFLFTSYMVQWIEIENKIKEMKTQKDENWLQVLRV. The helical transmembrane segment at 777-797 threads the bilayer; the sequence is SVIGFFLLQVAFFGTGNVASI. Residues 798 to 807 are Cytoplasmic-facing; that stretch reads SSFSLESVCR. A helical transmembrane segment spans residues 808–828; that stretch reads LLPIFDPFLMGALLMLKLIIP. Over 829–848 the chain is Lumenal; that stretch reads YGLLSTCLGILNLKLNFKDY. Residues 849–869 form a helical membrane-spanning segment; sequence TISSLIISMSDILSLNFFYLL. Residues 870-885 lie on the Cytoplasmic side of the membrane; the sequence is RTEGSWLDIGITISNY. The helical transmembrane segment at 886–906 threads the bilayer; sequence CLAILSSLFMLILEVLGHVLL. Residues 907-919 are Lumenal-facing; it reads KNVIIQDKTKKTQ.

Belongs to the PIGG/PIGN/PIGO family. PIGN subfamily. In terms of assembly, interacts with CSF1; CSF1 channels phosphatidylethanolamine to MCD4 in the endoplasmic reticulum at contact sites to support GPI anchor biosynthesis. N-glycosylated.

The protein resides in the endoplasmic reticulum membrane. It is found in the golgi apparatus membrane. It localises to the vacuole membrane. The protein operates within glycolipid biosynthesis; glycosylphosphatidylinositol-anchor biosynthesis. Its function is as follows. Ethanolamine phosphate transferase involved in glycosylphosphatidylinositol-anchor biosynthesis. Transfers ethanolamine phosphate to the first alpha-1,4-linked mannose of the glycosylphosphatidylinositol precursor of GPI-anchor. Ethanolamine phosphate on the alpha-1,4-linked mannose is essential for further mannosylation by GPI10 and is necessary for an efficient recognition of GPI lipids and GPI proteins by the GPI transamidase, for the efficient transport of GPI anchored proteins from endoplasmic reticulum to Golgi and for the physiological incorporation of ceramides into GPI anchors by lipid remodeling. Also involved in non-mitochondrial ATP movements across membrane and participates in Golgi and endoplasmic reticulum function, Also required for the incorporation of BGL2 into the cell wall. The sequence is that of GPI ethanolamine phosphate transferase 1 (MCD4) from Saccharomyces cerevisiae (strain ATCC 204508 / S288c) (Baker's yeast).